A 226-amino-acid chain; its full sequence is uncharacterized protein (226 aa).

Positions 1-18 (MRRIGLCISLLVTVLVMS) are cleaved as a signal peptide.

This is an uncharacterized protein from Bacillus subtilis (strain 168).